Here is a 184-residue protein sequence, read N- to C-terminus: Probable RNA 2'-phosphotransferase (184 aa).

Belongs to the KptA/TPT1 family.

In terms of biological role, removes the 2'-phosphate from RNA via an intermediate in which the phosphate is ADP-ribosylated by NAD followed by a presumed transesterification to release the RNA and generate ADP-ribose 1''-2''-cyclic phosphate (APPR&gt;P). May function as an ADP-ribosylase. This is Probable RNA 2'-phosphotransferase from Rhizobium leguminosarum bv. trifolii (strain WSM2304).